Here is a 103-residue protein sequence, read N- to C-terminus: UPF0298 protein LACR_0404 (103 aa).

This sequence belongs to the UPF0298 family.

It is found in the cytoplasm. This Lactococcus lactis subsp. cremoris (strain SK11) protein is UPF0298 protein LACR_0404.